The following is a 499-amino-acid chain: Laccase (499 aa).

Plastocyanin-like domains are found at residues 2–127 (VGPV…FVVY) and 139–281 (VDND…ILRY). N-linked (GlcNAc...) asparagine glycosylation is found at Asn-51 and Asn-54. Residues His-64, His-66, His-109, and His-111 each coordinate Cu cation. Cystine bridges form between Cys-85–Cys-488 and Cys-117–Cys-205. At Tyr-196 the chain carries 3'-nitrotyrosine. Residues Asn-208, Asn-217, Asn-292, and Asn-333 are each glycosylated (N-linked (GlcNAc...) asparagine). A Plastocyanin-like 3 domain is found at 348–470 (SVPVLLQILS…GGFAVVQAED (123 aa)). Position 372 is a 3'-nitrotyrosine (Tyr-372). The N-linked (GlcNAc...) asparagine glycan is linked to Asn-377. Cu cation is bound by residues His-395, His-398, and His-400. 2 N-linked (GlcNAc...) asparagine glycosylation sites follow: Asn-416 and Asn-436. Cu cation is bound by residues His-452, Cys-453, His-454, and His-458.

This sequence belongs to the multicopper oxidase family. Requires Cu cation as cofactor.

The protein resides in the secreted. It catalyses the reaction 4 hydroquinone + O2 = 4 benzosemiquinone + 2 H2O. Lignin degradation and detoxification of lignin-derived products. This Trametes maxima (White-rot fungus) protein is Laccase.